The primary structure comprises 538 residues: Atos homolog protein B (538 aa).

Residues 1–18 (MRHVQAEPSPSSEPEAGP) show a composition bias toward low complexity. Disordered stretches follow at residues 1 to 103 (MRHV…GLLG), 153 to 185 (NTLHTRDWASPDPGGQGSLGESPGPAPPGQLHT), 197 to 300 (GGKS…VLDP), and 323 to 342 (SLRKGPGLLSPPSASPVPTP). Residues 227-238 (HTPPGPGPPGPC) show a composition bias toward pro residues. A phosphoserine mark is found at S254 and S255. The segment covering 323–334 (SLRKGPGLLSPP) has biased composition (low complexity). The tract at residues 348 to 430 (LLGSFEESLL…VPKVGTIQVT (83 aa)) is required for macropage invasion. The segment at 436–444 (QTVVKMFLV) is transactivation domain 1 (TAD1).

This sequence belongs to the ATOS family.

The protein localises to the nucleus. Transcription regulator that may syncronize transcriptional and translational programs. The protein is Atos homolog protein B of Pongo abelii (Sumatran orangutan).